Consider the following 601-residue polypeptide: N-acetyltransferase ESCO2 (601 aa).

Residues Ser-29, Ser-75, Ser-223, and Ser-244 each carry the phosphoserine modification. Residues 222 to 243 (SSLENEPSLGRTQKSKSEVIED) are disordered. A compositionally biased stretch (basic and acidic residues) spans 282 to 305 (KEKLIKDSSDDRVSSKEHKVDKNE). The interval 282–315 (KEKLIKDSSDDRVSSKEHKVDKNEAFSSEDSLGE) is disordered. Over residues 306–315 (AFSSEDSLGE) the composition is skewed to polar residues. Ser-312 is modified (phosphoserine). The segment at 387-411 (TVCKSCGMIYTASNPEDEMQHVQHH) adopts a CCHH-type zinc-finger fold. Ser-512 is modified (phosphoserine).

The protein belongs to the acetyltransferase family. ECO subfamily. Widely expressed in fetal tissues. In adult, it is expressed in thymus, placenta and small intestine.

Its subcellular location is the nucleus. The protein resides in the chromosome. The enzyme catalyses L-lysyl-[protein] + acetyl-CoA = N(6)-acetyl-L-lysyl-[protein] + CoA + H(+). Its function is as follows. Acetyltransferase required for the establishment of sister chromatid cohesion. Couples the processes of cohesion and DNA replication to ensure that only sister chromatids become paired together. In contrast to the structural cohesins, the deposition and establishment factors are required only during the S phase. Acetylates the cohesin component SMC3. The chain is N-acetyltransferase ESCO2 from Homo sapiens (Human).